The sequence spans 153 residues: MTHPLIPQIINLATPIAEDRGLEVVDVVFQTNKRPPVLRVDIRNSQGETSLDDCEAVSRALEAVLDESQVMGGSYVLEISSPGISRQLHSDREFISFKGFAVIVTTEIPYLDHKEWRGQLQGRDESAVYINQKGRAIAIPRELIAKVQLDEHR.

It belongs to the RimP family.

It localises to the cytoplasm. Its function is as follows. Required for maturation of 30S ribosomal subunits. The sequence is that of Ribosome maturation factor RimP from Rippkaea orientalis (strain PCC 8801 / RF-1) (Cyanothece sp. (strain PCC 8801)).